We begin with the raw amino-acid sequence, 2226 residues long: DNA polymerase epsilon catalytic subunit A (2226 aa).

Residues 1240–1265 (RVSKVTSRKRRNGKANNVSDSEEEER) form a disordered region. Positions 2112, 2115, 2134, and 2137 each coordinate Zn(2+). The CysA-type zinc finger occupies 2112 to 2137 (CDYCNYIRDIDFCRDEQKNIWNCSNC). Cys-2168, Cys-2171, Cys-2183, and Cys-2185 together coordinate [4Fe-4S] cluster. Residues 2168–2185 (CSKCHQIKSDNMSEYCKC) carry the CysB motif motif.

It belongs to the DNA polymerase type-B family. Heterotetramer. Consists of 4 subunits: POL2, DPB2, DPB3 and DPB4. [4Fe-4S] cluster is required as a cofactor.

Its subcellular location is the nucleus. The enzyme catalyses DNA(n) + a 2'-deoxyribonucleoside 5'-triphosphate = DNA(n+1) + diphosphate. DNA polymerase II participates in chromosomal DNA replication. This Debaryomyces hansenii (strain ATCC 36239 / CBS 767 / BCRC 21394 / JCM 1990 / NBRC 0083 / IGC 2968) (Yeast) protein is DNA polymerase epsilon catalytic subunit A (POL2).